We begin with the raw amino-acid sequence, 245 residues long: 1-(5-phosphoribosyl)-5-[(5-phosphoribosylamino)methylideneamino] imidazole-4-carboxamide isomerase (245 aa).

Residue aspartate 7 is the Proton acceptor of the active site. The active-site Proton donor is aspartate 129.

This sequence belongs to the HisA/HisF family.

The protein resides in the cytoplasm. It carries out the reaction 1-(5-phospho-beta-D-ribosyl)-5-[(5-phospho-beta-D-ribosylamino)methylideneamino]imidazole-4-carboxamide = 5-[(5-phospho-1-deoxy-D-ribulos-1-ylimino)methylamino]-1-(5-phospho-beta-D-ribosyl)imidazole-4-carboxamide. It participates in amino-acid biosynthesis; L-histidine biosynthesis; L-histidine from 5-phospho-alpha-D-ribose 1-diphosphate: step 4/9. The sequence is that of 1-(5-phosphoribosyl)-5-[(5-phosphoribosylamino)methylideneamino] imidazole-4-carboxamide isomerase from Psychromonas ingrahamii (strain DSM 17664 / CCUG 51855 / 37).